A 339-amino-acid chain; its full sequence is MVIQKNWQELIKPNKLQVTTGDDPKRVATVVAEPLERGFGTTLGNALRRVLLSSLQGAAVTSVQIDGVLHEFSSIPGVREDVTDIVLNIKTIAIRSQTDAPKRMTLRKTGPGLVTAGDIGTVGDIQILNPDLVICTLDDGAEIRMEFTVATGKGYVPAERNRPEDAPIGLIPVDSLFSPVTKVSYRVETTREGQDLDKDKLTMTVETNGAVSPEDALAYAARIIQDQLQVFVNFEDPRKEEAAPLAPQLPFNPALLKKVDELELSVRSANCLKNDNIVYIGDLIQKSEGEMLRTPNFGRKSLNEIKEVLAGMGLHLGMDIPGWPPENIEDLAKRFEEHY.

The segment at Met-1–Glu-235 is alpha N-terminal domain (alpha-NTD). Positions Phe-251–Tyr-339 are alpha C-terminal domain (alpha-CTD).

Belongs to the RNA polymerase alpha chain family. In terms of assembly, homodimer. The RNAP catalytic core consists of 2 alpha, 1 beta, 1 beta' and 1 omega subunit. When a sigma factor is associated with the core the holoenzyme is formed, which can initiate transcription.

The catalysed reaction is RNA(n) + a ribonucleoside 5'-triphosphate = RNA(n+1) + diphosphate. In terms of biological role, DNA-dependent RNA polymerase catalyzes the transcription of DNA into RNA using the four ribonucleoside triphosphates as substrates. The chain is DNA-directed RNA polymerase subunit alpha from Methylobacterium radiotolerans (strain ATCC 27329 / DSM 1819 / JCM 2831 / NBRC 15690 / NCIMB 10815 / 0-1).